The primary structure comprises 494 residues: Sulfate adenylyltransferase subunit 1 (494 aa).

The tr-type G domain occupies 24-240 (TRPLRLITCG…LELATVRSAQ (217 aa)). The interval 33–40 (GSVDDGKS) is G1. 33–40 (GSVDDGKS) contributes to the GTP binding site. Residues 91-95 (GITID) form a G2 region. A G3 region spans residues 112–115 (DTPG). Residues 112–116 (DTPGH) and 167–170 (NKID) contribute to the GTP site. The tract at residues 167–170 (NKID) is G4. Residues 204 to 206 (SAL) form a G5 region.

The protein belongs to the TRAFAC class translation factor GTPase superfamily. Classic translation factor GTPase family. CysN/NodQ subfamily. In terms of assembly, heterodimer composed of CysD, the smaller subunit, and CysN.

It carries out the reaction sulfate + ATP + H(+) = adenosine 5'-phosphosulfate + diphosphate. It functions in the pathway sulfur metabolism; hydrogen sulfide biosynthesis; sulfite from sulfate: step 1/3. With CysD forms the ATP sulfurylase (ATPS) that catalyzes the adenylation of sulfate producing adenosine 5'-phosphosulfate (APS) and diphosphate, the first enzymatic step in sulfur assimilation pathway. APS synthesis involves the formation of a high-energy phosphoric-sulfuric acid anhydride bond driven by GTP hydrolysis by CysN coupled to ATP hydrolysis by CysD. This chain is Sulfate adenylyltransferase subunit 1, found in Rhizobium rhizogenes (strain K84 / ATCC BAA-868) (Agrobacterium radiobacter).